The sequence spans 287 residues: Eukaryotic translation initiation factor 3 subunit G (287 aa).

Disordered stretches follow at residues 1–34 (MSKL…KDGT) and 159–184 (TAGG…YVPP). An RRM domain is found at 207–285 (ATLRVTNVSE…LILRVEFAKR (79 aa)).

Belongs to the eIF-3 subunit G family. As to quaternary structure, component of the eukaryotic translation initiation factor 3 (eIF-3) complex.

The protein localises to the cytoplasm. In terms of biological role, RNA-binding component of the eukaryotic translation initiation factor 3 (eIF-3) complex, which is involved in protein synthesis of a specialized repertoire of mRNAs and, together with other initiation factors, stimulates binding of mRNA and methionyl-tRNAi to the 40S ribosome. The eIF-3 complex specifically targets and initiates translation of a subset of mRNAs involved in cell proliferation. This subunit can bind 18S rRNA. The chain is Eukaryotic translation initiation factor 3 subunit G (tif35) from Aspergillus oryzae (strain ATCC 42149 / RIB 40) (Yellow koji mold).